A 165-amino-acid polypeptide reads, in one-letter code: SsrA-binding protein (165 aa).

The segment at 141 to 165 is disordered; it reads KLHDKRENEKRKQSEREVKSALARY. Residues 144 to 159 show a composition bias toward basic and acidic residues; the sequence is DKRENEKRKQSEREVK.

Belongs to the SmpB family.

It is found in the cytoplasm. Functionally, required for rescue of stalled ribosomes mediated by trans-translation. Binds to transfer-messenger RNA (tmRNA), required for stable association of tmRNA with ribosomes. tmRNA and SmpB together mimic tRNA shape, replacing the anticodon stem-loop with SmpB. tmRNA is encoded by the ssrA gene; the 2 termini fold to resemble tRNA(Ala) and it encodes a 'tag peptide', a short internal open reading frame. During trans-translation Ala-aminoacylated tmRNA acts like a tRNA, entering the A-site of stalled ribosomes, displacing the stalled mRNA. The ribosome then switches to translate the ORF on the tmRNA; the nascent peptide is terminated with the 'tag peptide' encoded by the tmRNA and targeted for degradation. The ribosome is freed to recommence translation, which seems to be the essential function of trans-translation. The protein is SsrA-binding protein of Prochlorococcus marinus (strain SARG / CCMP1375 / SS120).